The following is a 125-amino-acid chain: Phosphoribosyl-AMP cyclohydrolase (125 aa).

Asp74 is a binding site for Mg(2+). Cys75 contributes to the Zn(2+) binding site. Mg(2+)-binding residues include Asp76 and Asp78. Residues Cys92 and Cys99 each contribute to the Zn(2+) site.

It belongs to the PRA-CH family. In terms of assembly, homodimer. Mg(2+) is required as a cofactor. It depends on Zn(2+) as a cofactor.

It localises to the cytoplasm. It catalyses the reaction 1-(5-phospho-beta-D-ribosyl)-5'-AMP + H2O = 1-(5-phospho-beta-D-ribosyl)-5-[(5-phospho-beta-D-ribosylamino)methylideneamino]imidazole-4-carboxamide. It functions in the pathway amino-acid biosynthesis; L-histidine biosynthesis; L-histidine from 5-phospho-alpha-D-ribose 1-diphosphate: step 3/9. In terms of biological role, catalyzes the hydrolysis of the adenine ring of phosphoribosyl-AMP. The chain is Phosphoribosyl-AMP cyclohydrolase from Syntrophotalea carbinolica (strain DSM 2380 / NBRC 103641 / GraBd1) (Pelobacter carbinolicus).